A 203-amino-acid chain; its full sequence is Peptidyl-tRNA hydrolase (203 aa).

Tyr26 is a tRNA binding site. Catalysis depends on His31, which acts as the Proton acceptor. TRNA is bound by residues Tyr82, Asn84, and Asn130.

The protein belongs to the PTH family. As to quaternary structure, monomer.

The protein resides in the cytoplasm. The catalysed reaction is an N-acyl-L-alpha-aminoacyl-tRNA + H2O = an N-acyl-L-amino acid + a tRNA + H(+). Functionally, hydrolyzes ribosome-free peptidyl-tRNAs (with 1 or more amino acids incorporated), which drop off the ribosome during protein synthesis, or as a result of ribosome stalling. Catalyzes the release of premature peptidyl moieties from peptidyl-tRNA molecules trapped in stalled 50S ribosomal subunits, and thus maintains levels of free tRNAs and 50S ribosomes. The polypeptide is Peptidyl-tRNA hydrolase (Streptomyces avermitilis (strain ATCC 31267 / DSM 46492 / JCM 5070 / NBRC 14893 / NCIMB 12804 / NRRL 8165 / MA-4680)).